The sequence spans 152 residues: SsrA-binding protein (152 aa).

The protein belongs to the SmpB family.

The protein localises to the cytoplasm. In terms of biological role, required for rescue of stalled ribosomes mediated by trans-translation. Binds to transfer-messenger RNA (tmRNA), required for stable association of tmRNA with ribosomes. tmRNA and SmpB together mimic tRNA shape, replacing the anticodon stem-loop with SmpB. tmRNA is encoded by the ssrA gene; the 2 termini fold to resemble tRNA(Ala) and it encodes a 'tag peptide', a short internal open reading frame. During trans-translation Ala-aminoacylated tmRNA acts like a tRNA, entering the A-site of stalled ribosomes, displacing the stalled mRNA. The ribosome then switches to translate the ORF on the tmRNA; the nascent peptide is terminated with the 'tag peptide' encoded by the tmRNA and targeted for degradation. The ribosome is freed to recommence translation, which seems to be the essential function of trans-translation. The sequence is that of SsrA-binding protein from Rickettsia canadensis (strain McKiel).